We begin with the raw amino-acid sequence, 998 residues long: Mediator of RNA polymerase II transcription subunit 14 (998 aa).

This sequence belongs to the Mediator complex subunit 14 family. As to quaternary structure, component of the Mediator complex.

It localises to the nucleus. In terms of biological role, component of the Mediator complex, a coactivator involved in the regulated transcription of nearly all RNA polymerase II-dependent genes. Mediator functions as a bridge to convey information from gene-specific regulatory proteins to the basal RNA polymerase II transcription machinery. Mediator is recruited to promoters by direct interactions with regulatory proteins and serves as a scaffold for the assembly of a functional preinitiation complex with RNA polymerase II and the general transcription factors. In Kluyveromyces lactis (strain ATCC 8585 / CBS 2359 / DSM 70799 / NBRC 1267 / NRRL Y-1140 / WM37) (Yeast), this protein is Mediator of RNA polymerase II transcription subunit 14 (RGR1).